Here is a 447-residue protein sequence, read N- to C-terminus: Probable ribosomal RNA small subunit methyltransferase B (447 aa).

S-adenosyl-L-methionine is bound by residues 259-265 (CAAPGGK), aspartate 283, aspartate 310, and aspartate 329. Residue cysteine 382 is the Nucleophile of the active site.

This sequence belongs to the class I-like SAM-binding methyltransferase superfamily. RsmB/NOP family.

The protein resides in the cytoplasm. It catalyses the reaction cytidine(967) in 16S rRNA + S-adenosyl-L-methionine = 5-methylcytidine(967) in 16S rRNA + S-adenosyl-L-homocysteine + H(+). Specifically methylates the cytosine at position 967 (m5C967) of 16S rRNA. The protein is Probable ribosomal RNA small subunit methyltransferase B of Bacillus subtilis (strain 168).